A 523-amino-acid chain; its full sequence is Solute carrier family 35 member F5 (523 aa).

2 helical membrane-spanning segments follow: residues 69–89 (MALG…SSEL) and 101–121 (FFST…FIIW). Phosphoserine is present on Ser-207. 8 helical membrane-spanning segments follow: residues 243-263 (ISFF…EALS), 268-288 (AIVN…AAVF), 296-316 (FTLS…LVNL), 327-347 (TIGS…IVMI), 361-381 (MFFG…FFLL), 395-415 (VVLM…EFLW), 420-440 (FLTS…LSII), and 452-472 (WLFF…TLLC). Residues 252 to 316 (FLANLSYQEA…SIGGVVLVNL (65 aa)) form the EamA domain.

The protein belongs to the SLC35F solute transporter family.

Its subcellular location is the membrane. In terms of biological role, putative solute transporter. The chain is Solute carrier family 35 member F5 (SLC35F5) from Pongo abelii (Sumatran orangutan).